A 273-amino-acid polypeptide reads, in one-letter code: Dermonecrotic toxin LhSicTox-alphaIA2bi (273 aa).

Residues Glu25 and Asp27 each coordinate Mg(2+). The active-site Nucleophile is the His41. 2 disulfide bridges follow: Cys45-Cys51 and Cys47-Cys190. Asp85 contacts Mg(2+).

The protein belongs to the arthropod phospholipase D family. Class II subfamily. Mg(2+) is required as a cofactor. As to expression, expressed by the venom gland.

It localises to the secreted. The catalysed reaction is an N-(acyl)-sphingosylphosphocholine = an N-(acyl)-sphingosyl-1,3-cyclic phosphate + choline. It carries out the reaction an N-(acyl)-sphingosylphosphoethanolamine = an N-(acyl)-sphingosyl-1,3-cyclic phosphate + ethanolamine. It catalyses the reaction a 1-acyl-sn-glycero-3-phosphocholine = a 1-acyl-sn-glycero-2,3-cyclic phosphate + choline. The enzyme catalyses a 1-acyl-sn-glycero-3-phosphoethanolamine = a 1-acyl-sn-glycero-2,3-cyclic phosphate + ethanolamine. In terms of biological role, dermonecrotic toxins cleave the phosphodiester linkage between the phosphate and headgroup of certain phospholipids (sphingolipid and lysolipid substrates), forming an alcohol (often choline) and a cyclic phosphate. This toxin acts on sphingomyelin (SM). It may also act on ceramide phosphoethanolamine (CPE), lysophosphatidylcholine (LPC) and lysophosphatidylethanolamine (LPE), but not on lysophosphatidylserine (LPS), and lysophosphatidylglycerol (LPG). It acts by transphosphatidylation, releasing exclusively cyclic phosphate products as second products. Induces dermonecrosis, hemolysis, increased vascular permeability, edema, inflammatory response, and platelet aggregation. This Loxosceles hirsuta (Recluse spider) protein is Dermonecrotic toxin LhSicTox-alphaIA2bi.